A 261-amino-acid polypeptide reads, in one-letter code: uncharacterized protein (261 aa).

This is an uncharacterized protein from Mycobacterium tuberculosis (strain CDC 1551 / Oshkosh).